The following is a 428-amino-acid chain: RF4 protein (428 aa).

N-linked (GlcNAc...) asparagine glycosylation is found at N8, N205, and N344.

Functionally, not known. This chain is RF4 protein (RF4), found in Kluyveromyces lactis (strain ATCC 8585 / CBS 2359 / DSM 70799 / NBRC 1267 / NRRL Y-1140 / WM37) (Yeast).